The sequence spans 173 residues: Protein GrpE (173 aa).

The protein belongs to the GrpE family. In terms of assembly, homodimer.

The protein localises to the cytoplasm. Functionally, participates actively in the response to hyperosmotic and heat shock by preventing the aggregation of stress-denatured proteins, in association with DnaK and GrpE. It is the nucleotide exchange factor for DnaK and may function as a thermosensor. Unfolded proteins bind initially to DnaJ; upon interaction with the DnaJ-bound protein, DnaK hydrolyzes its bound ATP, resulting in the formation of a stable complex. GrpE releases ADP from DnaK; ATP binding to DnaK triggers the release of the substrate protein, thus completing the reaction cycle. Several rounds of ATP-dependent interactions between DnaJ, DnaK and GrpE are required for fully efficient folding. The sequence is that of Protein GrpE from Campylobacter fetus subsp. fetus (strain 82-40).